The following is an 89-amino-acid chain: MTIRNQRFSLLKQPISSTLNQHLVDYPTPSNLSYWWGFGPLAGICLVIQIVTGVFLAMHYTPHVDLAFNSVEHIMRDVEGGWLLRYMHA.

Helical transmembrane passes span 38-58 and 82-89; these read FGPLAGICLVIQIVTGVFLAM and WLLRYMHA. Position 88 (His-88) interacts with heme b.

This sequence belongs to the cytochrome b family. The main subunits of complex b-c1 are: cytochrome b, cytochrome c1 and the Rieske protein. It depends on heme b as a cofactor.

The protein localises to the mitochondrion inner membrane. Component of the ubiquinol-cytochrome c reductase complex (complex III or cytochrome b-c1 complex) that is part of the mitochondrial respiratory chain. The b-c1 complex mediates electron transfer from ubiquinol to cytochrome c. Contributes to the generation of a proton gradient across the mitochondrial membrane that is then used for ATP synthesis. In Brassica napus (Rape), this protein is Cytochrome b (MT-CYB).